An 82-amino-acid chain; its full sequence is Small ribosomal subunit protein bS16 (82 aa).

The protein belongs to the bacterial ribosomal protein bS16 family.

This chain is Small ribosomal subunit protein bS16, found in Shigella boydii serotype 18 (strain CDC 3083-94 / BS512).